We begin with the raw amino-acid sequence, 656 residues long: Chaperone protein DnaK (656 aa).

Thr-204 is subject to Phosphothreonine; by autocatalysis. A disordered region spans residues 607–656 (VYAKKGGAAGAPPGGEAEGEPQAQAGGKKEDVVDAEFEEVKDEKKKDEDK). Residues 620–632 (GGEAEGEPQAQAG) are compositionally biased toward low complexity. Basic and acidic residues predominate over residues 647 to 656 (KDEKKKDEDK).

The protein belongs to the heat shock protein 70 family.

In terms of biological role, acts as a chaperone. The protein is Chaperone protein DnaK of Coxiella burnetii (strain CbuK_Q154) (Coxiella burnetii (strain Q154)).